Here is a 129-residue protein sequence, read N- to C-terminus: D-ribose pyranase (129 aa).

The active-site Proton donor is the His20. Substrate-binding positions include Asp28, His96, and 118-120; that span reads YAN.

The protein belongs to the RbsD / FucU family. RbsD subfamily. Homodecamer.

The protein localises to the cytoplasm. The enzyme catalyses beta-D-ribopyranose = beta-D-ribofuranose. The protein operates within carbohydrate metabolism; D-ribose degradation; D-ribose 5-phosphate from beta-D-ribopyranose: step 1/2. Functionally, catalyzes the interconversion of beta-pyran and beta-furan forms of D-ribose. In Exiguobacterium sibiricum (strain DSM 17290 / CCUG 55495 / CIP 109462 / JCM 13490 / 255-15), this protein is D-ribose pyranase.